The sequence spans 351 residues: RISC-loading complex subunit tarbp2 (351 aa).

Positions 1–22 are disordered; the sequence is MSENGDCEHQTSSGFPSIEQML. 2 consecutive DRBM domains span residues 29 to 96 and 150 to 218; these read TPIS…LLKE and NPVG…QIHQ. The tract at residues 221-243 is disordered; sequence AEHRESGETEPEEDQFSVGKLDG. Residues 278-346 enclose the DRBM 3 domain; it reads GFCSLLQDLS…AHNALQYLKI (69 aa).

The protein belongs to the TARBP2 family. Self-associates. Component of the RISC loading complex (RLC), or micro-RNA (miRNA) loading complex (miRLC), which is composed of dicer1, ago2 and tarbp2. Note that the trimeric RLC/miRLC is also referred to as RISC.

The protein localises to the cytoplasm. Its function is as follows. Required for formation of the RNA induced silencing complex (RISC). Component of the RISC loading complex (RLC), also known as the micro-RNA (miRNA) loading complex (miRLC), which is composed of dicer1, ago2 and tarbp2. Within the RLC/miRLC, dicer1 and tarbp2 are required to process precursor miRNAs (pre-miRNAs) to mature miRNAs and then load them onto ago2. ago2 bound to the mature miRNA constitutes the minimal RISC and may subsequently dissociate from dicer1 and tarbp2. May also play a role in the production of short interfering RNAs (siRNAs) from double-stranded RNA (dsRNA) by dicer1. The sequence is that of RISC-loading complex subunit tarbp2 (tarbp2) from Xenopus laevis (African clawed frog).